A 344-amino-acid polypeptide reads, in one-letter code: S-adenosylmethionine:tRNA ribosyltransferase-isomerase (344 aa).

It belongs to the QueA family. In terms of assembly, monomer.

Its subcellular location is the cytoplasm. It catalyses the reaction 7-aminomethyl-7-carbaguanosine(34) in tRNA + S-adenosyl-L-methionine = epoxyqueuosine(34) in tRNA + adenine + L-methionine + 2 H(+). Its pathway is tRNA modification; tRNA-queuosine biosynthesis. Transfers and isomerizes the ribose moiety from AdoMet to the 7-aminomethyl group of 7-deazaguanine (preQ1-tRNA) to give epoxyqueuosine (oQ-tRNA). The sequence is that of S-adenosylmethionine:tRNA ribosyltransferase-isomerase from Rhizorhabdus wittichii (strain DSM 6014 / CCUG 31198 / JCM 15750 / NBRC 105917 / EY 4224 / RW1) (Sphingomonas wittichii).